Consider the following 921-residue polypeptide: MEYKDTLLMPKTDFPMRGNLPNKEPEWQAKWEEEKLYEKIQEKNTGRKAYILHDGPPYANGELHMGHALNKTIKDIIVRYKSMAGFSSPYVPGWDTHGLPIETAIAKKGVKRKEMSIAEFRKLCAEYAMTQVDGQRTGFKRLGINGDWENPYITLLPEYEAEQIKVFGEMAKKGYIYKGKKPVYWSPSSESALAEAEIEYQDKKSASIFVAFKVTDGKGVLDEGTNIVIWTTTPWTIPANMGITVNPDLDYVVIESAGEKYVVAEALLPNLREKLGFEDATVVKTVRGSELDRIVTKHPFYDRDSLVMNGEHATAEAGTGAVHTAPGHGEDDFLIGKKYDLEILAPLDDRGVFTDEAPGFEGVFYDTANKMVTEKLEEVGALLKMEFITHSYPHDWRTKKPVIFRATAQWFASIDAFRDDLLKAVKGVNWTPAWGETRLFNMVRDRGDWVISRQRAWGVPLPIFYAENGEAIITDETINHISELFREHGSNVWFERDVKDLLPDGFTHPGSPNGEFTKETDIMDVWFDSGSSHQAVLNARPELTRPADLYMEGSDQYRGWFNSSLTTAVAITGEAPYRNVLSHGFALDGEGRKMSKSLGNTLLPGKVIKQLGADIVRLWVASVDYQADVRVSDEILKQVSEVYRKIRNTMRFLLGNINDFNPTTNTVSYENLREVDKYMLIKLNDLVKNVKDSYEAFEFSTIYHQINNFCTVELSQFYMDFAKDVVYIEAADSNDRRAMQTVFYEAAVTLTKLLAPILPHTTEEVWNSLIGEGAESIHLQDLPDVKVLADSEEITAKWDAFMQIRDNVQKALEFARNEKLIGKSMLAKVTLYVDGEAKTLFDSLEGDFAQLFIVSDFELVEGLENAPESAFKSNQVAVQITVAEGETCERCRVVKKDVGVDPKHPTLCGRCADIVVKHYEA.

Positions 57–67 (PYANGELHMGH) match the 'HIGH' region motif. Glutamate 552 is an L-isoleucyl-5'-AMP binding site. The 'KMSKS' region motif lies at 593 to 597 (KMSKS). Lysine 596 contributes to the ATP binding site. Cysteine 888, cysteine 891, cysteine 908, and cysteine 911 together coordinate Zn(2+).

Belongs to the class-I aminoacyl-tRNA synthetase family. IleS type 1 subfamily. In terms of assembly, monomer. Zn(2+) is required as a cofactor.

It is found in the cytoplasm. It carries out the reaction tRNA(Ile) + L-isoleucine + ATP = L-isoleucyl-tRNA(Ile) + AMP + diphosphate. Its function is as follows. Catalyzes the attachment of isoleucine to tRNA(Ile). As IleRS can inadvertently accommodate and process structurally similar amino acids such as valine, to avoid such errors it has two additional distinct tRNA(Ile)-dependent editing activities. One activity is designated as 'pretransfer' editing and involves the hydrolysis of activated Val-AMP. The other activity is designated 'posttransfer' editing and involves deacylation of mischarged Val-tRNA(Ile). This Listeria welshimeri serovar 6b (strain ATCC 35897 / DSM 20650 / CCUG 15529 / CIP 8149 / NCTC 11857 / SLCC 5334 / V8) protein is Isoleucine--tRNA ligase.